The following is a 114-amino-acid chain: Phosphorelay protein LuxU (114 aa).

In terms of domain architecture, HPt spans 19-114 (GSDNVPVLLD…TRDAYRSWTN (96 aa)). A Phosphohistidine modification is found at H58.

As to quaternary structure, monomer.

In terms of biological role, phosphorelay protein which receives sensory signals from LuxN and LuxP and transmits them to LuxO, at low cell density. LuxN and LuxP transfer a phosphoryl group to LuxU on His-58 and this phosphoryl group is further transferred to LuxO. At high cell density, as LuxU could function to establish an equilibrium between the aspartyl-phosphate of LuxN and the aspartyl-phosphate of LuxO, LuxU transfers phosphate from LuxO to LuxN (and probably LuxP) and finally phosphate is drained from the system. The chain is Phosphorelay protein LuxU (luxU) from Vibrio harveyi (Beneckea harveyi).